A 229-amino-acid polypeptide reads, in one-letter code: Adapter protein MecA (229 aa).

Belongs to the MecA family. Homodimer.

In terms of biological role, enables the recognition and targeting of unfolded and aggregated proteins to the ClpC protease or to other proteins involved in proteolysis. This Latilactobacillus sakei subsp. sakei (strain 23K) (Lactobacillus sakei subsp. sakei) protein is Adapter protein MecA.